Here is a 256-residue protein sequence, read N- to C-terminus: MACGIPWKLARRDELMATRQAERPGEYFPPPYPPCPPTVVTPLRTSAYDFPEATFVTRPCLPAKKATGHKNVFERLTDTAYYTGSHRERFDEFGNGRGIAGREYLYAYDGLTESPSRCHEVYSSVIKRPRKPVVTPGTLGIQRFGVQIPAPRLMWLYRNGDKHDDGTPFFVRPYIKSMESLYQQITKEITPIAGPVRRIFDQNFRVITDLDDIVDGAKYLCTSGEPPAAYDRLEKFLSEWVIQKSQTKVPSQFFVV.

Residues 71–103 (NVFERLTDTAYYTGSHRERFDEFGNGRGIAGRE) form a partial p25alpha domain region. A Doublecortin domain is found at 152–226 (RLMWLYRNGD…AKYLCTSGEP (75 aa)).

It localises to the cytoplasm. Its subcellular location is the cytoskeleton. In terms of biological role, specifically required in the formation and maintenance of the conoid fibers; the conoid is a component of the cytoskeletal apical complex, which is composed of a left-handed spiral of 14 fibers made from a nontubular tubulin polymer. Promotes the organization, curvature, and stability of the conoid fibers, and probably bridges other conoid components to the tubulin core. The chain is Doublecortin domain-containing protein from Toxoplasma gondii (strain ATCC 50861 / VEG).